The primary structure comprises 322 residues: Replication factor C small subunit (322 aa).

Residue 46-53 (GSAGIGKT) participates in ATP binding.

This sequence belongs to the activator 1 small subunits family. RfcS subfamily. In terms of assembly, heteromultimer composed of small subunits (RfcS) and large subunits (RfcL).

Its function is as follows. Part of the RFC clamp loader complex which loads the PCNA sliding clamp onto DNA. In Methanoculleus marisnigri (strain ATCC 35101 / DSM 1498 / JR1), this protein is Replication factor C small subunit.